Here is a 197-residue protein sequence, read N- to C-terminus: dITP/XTP pyrophosphatase (197 aa).

10 to 15 (TKNQGK) is a binding site for substrate. D70 acts as the Proton acceptor in catalysis. D70 provides a ligand contact to Mg(2+). Substrate contacts are provided by residues S71, 151-154 (FGYD), K173, and 178-179 (HR).

The protein belongs to the HAM1 NTPase family. Homodimer. Mg(2+) is required as a cofactor.

It catalyses the reaction XTP + H2O = XMP + diphosphate + H(+). It carries out the reaction dITP + H2O = dIMP + diphosphate + H(+). The catalysed reaction is ITP + H2O = IMP + diphosphate + H(+). Pyrophosphatase that catalyzes the hydrolysis of nucleoside triphosphates to their monophosphate derivatives, with a high preference for the non-canonical purine nucleotides XTP (xanthosine triphosphate), dITP (deoxyinosine triphosphate) and ITP. Seems to function as a house-cleaning enzyme that removes non-canonical purine nucleotides from the nucleotide pool, thus preventing their incorporation into DNA/RNA and avoiding chromosomal lesions. The sequence is that of dITP/XTP pyrophosphatase from Symbiobacterium thermophilum (strain DSM 24528 / JCM 14929 / IAM 14863 / T).